Here is a 204-residue protein sequence, read N- to C-terminus: Guanine-specific ADP-ribosyl transferase (204 aa).

An N-terminal signal peptide occupies residues 1–42 (MITTSLRRRTAAAVLSLSAVLATTAATAPGAAPAPSAAPAKA). Residues C46 and C76 are joined by a disulfide bond. NADH-binding positions include 81-85 (RSDSR) and K98. GDP-binding positions include 111–114 (VLVN), 132–134 (WYK), W159, and Q162. The PN (phosphate-nicotinamide) loop motif lies at 132 to 136 (WYKSG). Cysteines 180 and 194 form a disulfide.

This sequence belongs to the pierisin ADP-ribosyltransferase family. In terms of assembly, monomer.

Its subcellular location is the secreted. The enzyme catalyses guanosine + NAD(+) = N(2)-(ADP-D-ribosyl)-guanosine + nicotinamide + H(+). It catalyses the reaction a 2'-deoxyguanosine in DNA + NAD(+) = an N(2)-(ADP-L-ribosyl)-2'-deoxyguanosine in DNA + nicotinamide + H(+). It carries out the reaction 2'-deoxyguanosine + NAD(+) = N(2)-(ADP-D-ribosyl)-2'-deoxyguanosine + nicotinamide + H(+). The catalysed reaction is GMP + NAD(+) = N(2)-(ADP-D-ribosyl)-GMP + nicotinamide + H(+). The enzyme catalyses GTP + NAD(+) = N(2)-(ADP-D-ribosyl)-GTP + nicotinamide + H(+). It catalyses the reaction dGMP + NAD(+) = N(2)-(ADP-D-ribosyl)-dGMP + nicotinamide + H(+). It carries out the reaction dGTP + NAD(+) = N(2)-(ADP-D-ribosyl)-dGTP + nicotinamide + H(+). The catalysed reaction is 3',5'-cyclic GMP + NAD(+) = N(2)-(ADP-D-ribosyl)-3',5'-cyclic GMP + nicotinamide + H(+). The enzyme catalyses guanine + NAD(+) = N(2)-(ADP-D-ribosyl)-guanine + nicotinamide + H(+). It catalyses the reaction GDP + NAD(+) = N(2)-(ADP-D-ribosyl)-GDP + nicotinamide + H(+). With respect to regulation, inhibited by NADH. In terms of biological role, ADP-ribosylates the N2 amino group of guanosine, deoxyguanosine, GMP, dGMP, cGMP, GTP and dGTP; oligo-guanosine, oligo-deoxyguanosine and tRNA are ADP-ribosylated less efficiently, while dsDNA is a very poor substrate. Also acts on GDP. This chain is Guanine-specific ADP-ribosyl transferase, found in Streptomyces coelicolor (strain ATCC BAA-471 / A3(2) / M145).